We begin with the raw amino-acid sequence, 94 residues long: Co-chaperonin GroES (94 aa).

The protein belongs to the GroES chaperonin family. Heptamer of 7 subunits arranged in a ring. Interacts with the chaperonin GroEL.

Its subcellular location is the cytoplasm. In terms of biological role, together with the chaperonin GroEL, plays an essential role in assisting protein folding. The GroEL-GroES system forms a nano-cage that allows encapsulation of the non-native substrate proteins and provides a physical environment optimized to promote and accelerate protein folding. GroES binds to the apical surface of the GroEL ring, thereby capping the opening of the GroEL channel. The protein is Co-chaperonin GroES of Lactiplantibacillus plantarum (strain ATCC BAA-793 / NCIMB 8826 / WCFS1) (Lactobacillus plantarum).